A 213-amino-acid polypeptide reads, in one-letter code: Holliday junction branch migration complex subunit RuvA (213 aa).

The segment at 1-63 (MIGMLTGRVA…EDAFKLYGFL (63 aa)) is domain I. The tract at residues 64-142 (DDIDRAWFVH…PTGRSFSIGL (79 aa)) is domain II. The tract at residues 143-160 (PVHSDDGTTGGAPVAPAG) is flexible linker. Residues 161–213 (GDSLAREDAVSALVNLGYNESQARQAVAKILRDADSEAPLGDVIRLSLKELAA) are domain III.

This sequence belongs to the RuvA family. In terms of assembly, homotetramer. Forms an RuvA(8)-RuvB(12)-Holliday junction (HJ) complex. HJ DNA is sandwiched between 2 RuvA tetramers; dsDNA enters through RuvA and exits via RuvB. An RuvB hexamer assembles on each DNA strand where it exits the tetramer. Each RuvB hexamer is contacted by two RuvA subunits (via domain III) on 2 adjacent RuvB subunits; this complex drives branch migration. In the full resolvosome a probable DNA-RuvA(4)-RuvB(12)-RuvC(2) complex forms which resolves the HJ.

The protein resides in the cytoplasm. Functionally, the RuvA-RuvB-RuvC complex processes Holliday junction (HJ) DNA during genetic recombination and DNA repair, while the RuvA-RuvB complex plays an important role in the rescue of blocked DNA replication forks via replication fork reversal (RFR). RuvA specifically binds to HJ cruciform DNA, conferring on it an open structure. The RuvB hexamer acts as an ATP-dependent pump, pulling dsDNA into and through the RuvAB complex. HJ branch migration allows RuvC to scan DNA until it finds its consensus sequence, where it cleaves and resolves the cruciform DNA. The polypeptide is Holliday junction branch migration complex subunit RuvA (Maricaulis maris (strain MCS10) (Caulobacter maris)).